The primary structure comprises 250 residues: Probable transcriptional regulatory protein Lferr_0060 (250 aa).

It belongs to the TACO1 family.

It localises to the cytoplasm. The polypeptide is Probable transcriptional regulatory protein Lferr_0060 (Acidithiobacillus ferrooxidans (strain ATCC 53993 / BNL-5-31) (Leptospirillum ferrooxidans (ATCC 53993))).